The chain runs to 243 residues: Small ribosomal subunit protein uS5 (243 aa).

Basic and acidic residues-rich tracts occupy residues 1 to 21 and 34 to 46; these read MPID…EGQK and LEEK…DHKG. The tract at residues 1-85 is disordered; the sequence is MPIDKKQEKN…NFKKNANKKP (85 aa). Positions 89–152 constitute an S5 DRBM domain; sequence FEEKIVNIAR…KDAQNNLIRV (64 aa).

The protein belongs to the universal ribosomal protein uS5 family. As to quaternary structure, part of the 30S ribosomal subunit. Contacts proteins S4 and S8.

With S4 and S12 plays an important role in translational accuracy. Its function is as follows. Located at the back of the 30S subunit body where it stabilizes the conformation of the head with respect to the body. This Mycoplasma mobile (strain ATCC 43663 / 163K / NCTC 11711) (Mesomycoplasma mobile) protein is Small ribosomal subunit protein uS5.